Here is a 566-residue protein sequence, read N- to C-terminus: Membrane protein insertase YidC (566 aa).

The next 5 helical transmembrane spans lie at 3–23, 346–366, 369–389, 436–456, and 509–529; these read IKRI…FNAW, GWLW…HAVV, WGWS…WFSA, GGCL…YVII, and MWIL…GLVL.

It belongs to the OXA1/ALB3/YidC family. Type 1 subfamily. Interacts with the Sec translocase complex via SecD. Specifically interacts with transmembrane segments of nascent integral membrane proteins during membrane integration.

Its subcellular location is the cell inner membrane. Functionally, required for the insertion and/or proper folding and/or complex formation of integral membrane proteins into the membrane. Involved in integration of membrane proteins that insert both dependently and independently of the Sec translocase complex, as well as at least some lipoproteins. Aids folding of multispanning membrane proteins. This chain is Membrane protein insertase YidC, found in Coxiella burnetii (strain RSA 331 / Henzerling II).